The chain runs to 304 residues: UDP-3-O-acyl-N-acetylglucosamine deacetylase (304 aa).

The Zn(2+) site is built by H78, H237, and D241. H264 acts as the Proton donor in catalysis.

It belongs to the LpxC family. Zn(2+) serves as cofactor.

It carries out the reaction a UDP-3-O-[(3R)-3-hydroxyacyl]-N-acetyl-alpha-D-glucosamine + H2O = a UDP-3-O-[(3R)-3-hydroxyacyl]-alpha-D-glucosamine + acetate. The protein operates within glycolipid biosynthesis; lipid IV(A) biosynthesis; lipid IV(A) from (3R)-3-hydroxytetradecanoyl-[acyl-carrier-protein] and UDP-N-acetyl-alpha-D-glucosamine: step 2/6. Functionally, catalyzes the hydrolysis of UDP-3-O-myristoyl-N-acetylglucosamine to form UDP-3-O-myristoylglucosamine and acetate, the committed step in lipid A biosynthesis. In Marinobacter nauticus (strain ATCC 700491 / DSM 11845 / VT8) (Marinobacter aquaeolei), this protein is UDP-3-O-acyl-N-acetylglucosamine deacetylase.